The chain runs to 346 residues: Melanoma-associated antigen B4 (346 aa).

Residues 1 to 18 show a composition bias toward basic residues; the sequence is MPRGQKSKLRAREKRQRT. Residues 1–107 are disordered; it reads MPRGQKSKLR…STSTERSLKD (107 aa). Residues 45-54 are compositionally biased toward polar residues; sequence VLRDTASSSL. The segment covering 92–101 has biased composition (low complexity); the sequence is ASSSQASTST. Residues 109–307 form the MAGE domain; that stretch reads LTRKTKMLVQ…NNFPLLYEEA (199 aa). The disordered stretch occupies residues 311–346; the sequence is EEERAGARPRVAARRGTTAMTSAYSRATSSSSSQPM. A compositionally biased stretch (low complexity) spans 318–346; sequence RPRVAARRGTTAMTSAYSRATSSSSSQPM.

In terms of tissue distribution, expressed in testis.

The protein resides in the cytoplasm. This chain is Melanoma-associated antigen B4 (MAGEB4), found in Homo sapiens (Human).